The chain runs to 404 residues: MADKVLKDKRRLFVRSVDMGTINGLLDELFEKRVLNHEEMERVRCAHSTVMDQARVLIDSVLRKGPNACQIFISNICNEDIHLAQTLGLSSGSPSGNDHTKLDSQVEVPSLPAFVENMPGPTIPDSEESTDTLKLCPPETFVKMYKEKAEEIYPIKERKDRTRLALIICNIEFDHLSTRDGAELDIAGMESLLEGLGYSVVVKRKLTAKGMESVLREFAARPEHKSSDSTFLVLMSHGILNGICGTAHSVENPDVLAYDTIFQIFNNRHCLNLKDKPKVIIIQACRGENPGELWVSDSPKASTDSWTHQPLMLQSDAIHKVHVEKDFIAFCSSTPHNVSWRHITKGSLFIAQLITCFQKYSWCCHLEGVFRKVQQSFEKPDVKAQMPTIERVSMTRYFYLFPGH.

Residues 1–91 form the CARD domain; the sequence is MADKVLKDKR…HLAQTLGLSS (91 aa). The propeptide occupies 1–119; the sequence is MADKVLKDKR…SLPAFVENMP (119 aa). Residues His237 and Cys285 contribute to the active site. Positions 298–316 are excised as a propeptide; that stretch reads SPKASTDSWTHQPLMLQSD. Ser302 is modified (phosphoserine).

It belongs to the peptidase C14A family. As to quaternary structure, heterotetramer that consists of two anti-parallel arranged heterodimers, each one formed by a 20 kDa (Caspase-1 subunit p20) and a 10 kDa (Caspase-1 subunit p10) subunit. May be a component of the inflammasome, a protein complex which also includes PYCARD, CARD8 and NLRP2 and whose function would be the activation of pro-inflammatory caspases. Component of the AIM2 PANoptosome complex, a multiprotein complex that drives inflammatory cell death (PANoptosis). Both the p10 and p20 subunits interact with MEFV. Interacts with CARD17P/INCA and CARD18. Interacts with SERPINB1; this interaction regulates CASP1 activity. In terms of assembly, heterotetramer that consists of two anti-parallel arranged heterodimers, each one formed by a 20 kDa (Caspase-1 subunit p20) and a 10 kDa (Caspase-1 subunit p10) subunit. In terms of processing, the two subunits are derived from the precursor sequence by an autocatalytic mechanism. Ubiquitinated via 'Lys-11'-linked polyubiquitination. Deubiquitinated by USP8.

It localises to the cytoplasm. The protein localises to the cell membrane. The enzyme catalyses Strict requirement for an Asp residue at position P1 and has a preferred cleavage sequence of Tyr-Val-Ala-Asp-|-.. Functionally, thiol protease involved in a variety of inflammatory processes by proteolytically cleaving other proteins, such as the precursors of the inflammatory cytokines interleukin-1 beta (IL1B) and interleukin 18 (IL18) as well as the pyroptosis inducer Gasdermin-D (GSDMD), into active mature peptides. Plays a key role in cell immunity as an inflammatory response initiator: once activated through formation of an inflammasome complex, it initiates a pro-inflammatory response through the cleavage of the two inflammatory cytokines IL1B and IL18, releasing the mature cytokines which are involved in a variety of inflammatory processes. Cleaves a tetrapeptide after an Asp residue at position P1. Also initiates pyroptosis, a programmed lytic cell death pathway, through cleavage of GSDMD. In contrast to cleavage of interleukin IL1B, recognition and cleavage of GSDMD is not strictly dependent on the consensus cleavage site but depends on an exosite interface on CASP1 that recognizes and binds the Gasdermin-D, C-terminal (GSDMD-CT) part. Cleaves and activates CASP7 in response to bacterial infection, promoting plasma membrane repair. Upon inflammasome activation, during DNA virus infection but not RNA virus challenge, controls antiviral immunity through the cleavage of CGAS, rendering it inactive. In apoptotic cells, cleaves SPHK2 which is released from cells and remains enzymatically active extracellularly. This is Caspase-1 (CASP1) from Canis lupus familiaris (Dog).